Consider the following 291-residue polypeptide: Pentonolactonase XacC (291 aa).

A divalent metal cation-binding residues include glutamate 15, asparagine 141, and aspartate 191. Aspartate 191 functions as the Proton donor/acceptor in the catalytic mechanism.

It belongs to the SMP-30/CGR1 family. Monomer. Requires a divalent metal cation as cofactor.

The enzyme catalyses L-arabinono-1,4-lactone + H2O = L-arabinonate + H(+). The catalysed reaction is D-xylono-1,4-lactone + H2O = D-xylonate + H(+). It participates in carbohydrate degradation. Pentonolactonase involved in D-arabinose and D-xylose catabolism. Catalyzes the hydrolysis of both L-arabino-gamma-lactone and D-xylono-gamma-lactone to the corresponding acids. Can also hydrolyze D-galactono-gamma-lactone and D-glucono-delta-lactone. This is Pentonolactonase XacC from Haloferax volcanii (strain ATCC 29605 / DSM 3757 / JCM 8879 / NBRC 14742 / NCIMB 2012 / VKM B-1768 / DS2) (Halobacterium volcanii).